Consider the following 686-residue polypeptide: DNA ligase (686 aa).

NAD(+)-binding positions include 33 to 37, 82 to 83, and Glu122; these read DSVYD and SL. The N6-AMP-lysine intermediate role is filled by Lys124. 4 residues coordinate NAD(+): Arg145, Glu182, Lys300, and Lys324. Zn(2+) is bound by residues Cys418, Cys421, Cys436, and Cys441. One can recognise a BRCT domain in the interval 600 to 686; sequence AVSQILAGKK…PTVESGDLHP (87 aa).

This sequence belongs to the NAD-dependent DNA ligase family. LigA subfamily. It depends on Mg(2+) as a cofactor. Mn(2+) is required as a cofactor.

The catalysed reaction is NAD(+) + (deoxyribonucleotide)n-3'-hydroxyl + 5'-phospho-(deoxyribonucleotide)m = (deoxyribonucleotide)n+m + AMP + beta-nicotinamide D-nucleotide.. DNA ligase that catalyzes the formation of phosphodiester linkages between 5'-phosphoryl and 3'-hydroxyl groups in double-stranded DNA using NAD as a coenzyme and as the energy source for the reaction. It is essential for DNA replication and repair of damaged DNA. This Synechococcus sp. (strain JA-2-3B'a(2-13)) (Cyanobacteria bacterium Yellowstone B-Prime) protein is DNA ligase.